The chain runs to 637 residues: Probable potassium transport system protein Kup (637 aa).

12 helical membrane-spanning segments follow: residues 24–44, 64–84, 113–133, 151–171, 182–202, 225–245, 261–281, 290–310, 351–371, 381–401, 409–429, and 433–453; these read LAIA…LYAL, VISL…LLFV, AGAL…DAVI, PHLS…LFWI, LFGP…VYHI, LLQA…AEAL, AYGL…ALLI, PFFL…STVA, IYVP…VIGF, YGIA…VVMV, LLVG…FGAN, and VAQG…LLMT.

The protein belongs to the HAK/KUP transporter (TC 2.A.72) family.

It is found in the cell inner membrane. It carries out the reaction K(+)(in) + H(+)(in) = K(+)(out) + H(+)(out). Functionally, transport of potassium into the cell. Likely operates as a K(+):H(+) symporter. The sequence is that of Probable potassium transport system protein Kup from Burkholderia ambifaria (strain MC40-6).